The following is a 241-amino-acid chain: 1-(5-phosphoribosyl)-5-[(5-phosphoribosylamino)methylideneamino] imidazole-4-carboxamide isomerase (241 aa).

Asp8 acts as the Proton acceptor in catalysis. The active-site Proton donor is the Asp130.

It belongs to the HisA/HisF family.

The protein localises to the cytoplasm. The enzyme catalyses 1-(5-phospho-beta-D-ribosyl)-5-[(5-phospho-beta-D-ribosylamino)methylideneamino]imidazole-4-carboxamide = 5-[(5-phospho-1-deoxy-D-ribulos-1-ylimino)methylamino]-1-(5-phospho-beta-D-ribosyl)imidazole-4-carboxamide. It functions in the pathway amino-acid biosynthesis; L-histidine biosynthesis; L-histidine from 5-phospho-alpha-D-ribose 1-diphosphate: step 4/9. This Leptospira borgpetersenii serovar Hardjo-bovis (strain JB197) protein is 1-(5-phosphoribosyl)-5-[(5-phosphoribosylamino)methylideneamino] imidazole-4-carboxamide isomerase.